The sequence spans 219 residues: Virginiamycin A acetyltransferase (219 aa).

Residue histidine 87 is part of the active site.

This sequence belongs to the transferase hexapeptide repeat family.

Its function is as follows. Inactivates the A compounds of virginiamycin-like antibiotics, thus providing resistance to these antibiotics. The chain is Virginiamycin A acetyltransferase (vat) from Staphylococcus aureus.